The chain runs to 431 residues: MKLTVVTFALLAFISFNTFAKQVRLDNVAVIVDQGVVLESQIEELVNTVKRNALTNNQTLPSDRVLRTQAIERLIVDSLQNQMAERMGIQISDPQLDQTIDNIAREDGTTVEDLRKNLASEGVSFEVYREQVRKELVTGEVRRANVRRRIYITPQEISNLVTLIDEQGGQQAEYHLGHILIGFPPEPTDEDVSKAKDTAEKVLELLNNGSEFAKIATASSSGSKALEGGDLGWMNINSMPTLFAEAVQGTSKDDLIGPIRSGAGFHVLKIIDFRGIEKVEVAELKSRHILIKPSVILSDEKAEKMLTEFRKELLAGEADFAELAKEHSADPGSALRGGDLGWADPNVYVPAFRDTLQSLEVGEISQPVRSTHGWHLMQLMDKRVQDATEKRKEDKAYQLLFQRKFAEETEAWLKEMRDSAYVELLDEKDNS.

Positions 1 to 20 (MKLTVVTFALLAFISFNTFA) are cleaved as a signal peptide. 2 consecutive PpiC domains span residues 171-272 (QAEY…KIID) and 281-381 (VAEL…QLMD).

It is found in the periplasm. It carries out the reaction [protein]-peptidylproline (omega=180) = [protein]-peptidylproline (omega=0). Chaperone involved in the correct folding and assembly of outer membrane proteins. Recognizes specific patterns of aromatic residues and the orientation of their side chains, which are found more frequently in integral outer membrane proteins. May act in both early periplasmic and late outer membrane-associated steps of protein maturation. This chain is Chaperone SurA, found in Pseudoalteromonas atlantica (strain T6c / ATCC BAA-1087).